The chain runs to 110 residues: Ribonuclease P protein component 1 (110 aa).

This sequence belongs to the eukaryotic/archaeal RNase P protein component 1 family. Consists of a catalytic RNA component and at least 4-5 protein subunits.

It localises to the cytoplasm. The enzyme catalyses Endonucleolytic cleavage of RNA, removing 5'-extranucleotides from tRNA precursor.. Its function is as follows. Part of ribonuclease P, a protein complex that generates mature tRNA molecules by cleaving their 5'-ends. The chain is Ribonuclease P protein component 1 from Methanosarcina mazei (strain ATCC BAA-159 / DSM 3647 / Goe1 / Go1 / JCM 11833 / OCM 88) (Methanosarcina frisia).